Reading from the N-terminus, the 433-residue chain is Arabinooligosaccharide-binding protein (433 aa).

Positions 1–21 are cleaved as a signal peptide; that stretch reads MKKMTVCFLVLMMLLTLVIAG. The N-palmitoyl cysteine moiety is linked to residue cysteine 22. The S-diacylglycerol cysteine moiety is linked to residue cysteine 22.

It belongs to the bacterial solute-binding protein 1 family. The complex is composed of two ATP-binding proteins (MsmX), two transmembrane proteins (AraP and AraQ) and a solute-binding protein (AraN).

Its subcellular location is the cell membrane. Its function is as follows. Part of the ABC transporter complex AraNPQ involved in the uptake of arabinooligosaccharides. Transports alpha-1,5-arabinooligosaccharides, at least up to four L-arabinosyl units. AraN captures the substrate and delivers it to the two transmembrane components. The polypeptide is Arabinooligosaccharide-binding protein (Bacillus subtilis (strain 168)).